The chain runs to 253 residues: Imidazole glycerol phosphate synthase subunit HisF (253 aa).

Residues D12 and D131 contribute to the active site.

It belongs to the HisA/HisF family. Heterodimer of HisH and HisF.

It is found in the cytoplasm. It carries out the reaction 5-[(5-phospho-1-deoxy-D-ribulos-1-ylimino)methylamino]-1-(5-phospho-beta-D-ribosyl)imidazole-4-carboxamide + L-glutamine = D-erythro-1-(imidazol-4-yl)glycerol 3-phosphate + 5-amino-1-(5-phospho-beta-D-ribosyl)imidazole-4-carboxamide + L-glutamate + H(+). It participates in amino-acid biosynthesis; L-histidine biosynthesis; L-histidine from 5-phospho-alpha-D-ribose 1-diphosphate: step 5/9. In terms of biological role, IGPS catalyzes the conversion of PRFAR and glutamine to IGP, AICAR and glutamate. The HisF subunit catalyzes the cyclization activity that produces IGP and AICAR from PRFAR using the ammonia provided by the HisH subunit. The sequence is that of Imidazole glycerol phosphate synthase subunit HisF from Corynebacterium urealyticum (strain ATCC 43042 / DSM 7109).